Reading from the N-terminus, the 395-residue chain is XK-related protein 8 (395 aa).

Residues 1–12 (MPWSSRGALLRD) lie on the Cytoplasmic side of the membrane. The chain crosses the membrane as a helical span at residues 13–33 (LVLGVLGTAAFLLDLGTDLWA). The Extracellular segment spans residues 34–47 (AVQYALGGRYLWAA). A helical membrane pass occupies residues 48–68 (LVLALLGLASVALQLFSWLWL). The Cytoplasmic portion of the chain corresponds to 69-158 (RADPAGLHGS…VLAIMLQSGR (90 aa)). Residues 159-179 (AEYYQWVGICTSFLGISWALL) traverse the membrane as a helical segment. The Extracellular portion of the chain corresponds to 180 to 200 (DYHRALRTCLPSRPLLGLGSS). The helical transmembrane segment at 201-221 (VIYFLWNLLLLWPRVLAVALF) threads the bilayer. Over 222-223 (SA) the chain is Cytoplasmic. The chain crosses the membrane as a helical span at residues 224–244 (LFPSYVALHFLGLWLVLLLWV). Topologically, residues 245-258 (WLQGTDFMPDPSSE) are extracellular. A helical transmembrane segment spans residues 259 to 279 (WLYQVTVATILYFSWFNVAEG). Residues 280 to 284 (RTRGR) lie on the Cytoplasmic side of the membrane. Residues 285 to 305 (AIIHFAFLLSDSILLVATWVT) form a helical membrane-spanning segment. The Extracellular portion of the chain corresponds to 306–312 (HSSWLPS). Residues 313 to 333 (GIPLQLWLPVGCGCFFLGLAL) form a helical membrane-spanning segment. Topologically, residues 334–395 (RLVYYHWLHP…KDEAALPVKG (62 aa)) are cytoplasmic. The residue at position 362 (Ser-362) is a Phosphoserine. Phosphothreonine is present on Thr-375.

It belongs to the XK family. In terms of assembly, interacts with BSG and NPTN; which act as chaperones to localize XKR8 at the cell membrane. Homodimer. Post-translationally, undergoes proteolytic processing by caspase-3 (CASP3), leading to its activation. In terms of processing, phosphorylation at Thr-375 activates the phospholipid scramblase activity.

It is found in the cell membrane. The protein localises to the cytoplasm. Its subcellular location is the perinuclear region. The catalysed reaction is a 1,2-diacyl-sn-glycero-3-phospho-L-serine(in) = a 1,2-diacyl-sn-glycero-3-phospho-L-serine(out). Its activity is regulated as follows. Activated upon caspase cleavage to generate the XK-related protein 8, processed form. Does not act prior the onset of apoptosis. Functionally, phospholipid scramblase that promotes phosphatidylserine exposure on apoptotic cell surface. Phosphatidylserine is a specific marker only present at the surface of apoptotic cells and acts as a specific signal for engulfment. Required for the clearance of apoptotic cells, such as engulfment of apoptotic germ cells by Sertoli cells, clearance of senescent neutrophils or regulation of bipolar cell numbers in the retina. Has no effect on calcium-induced exposure of phosphatidylserine. Promotes myoblast differentiation and survival. This chain is XK-related protein 8, found in Pan troglodytes (Chimpanzee).